Reading from the N-terminus, the 210-residue chain is Probable septum site-determining protein MinC (210 aa).

This sequence belongs to the MinC family. In terms of assembly, interacts with MinD and FtsZ.

Its function is as follows. Cell division inhibitor that blocks the formation of polar Z ring septums. Rapidly oscillates between the poles of the cell to destabilize FtsZ filaments that have formed before they mature into polar Z rings. Prevents FtsZ polymerization. This Thermotoga sp. (strain RQ2) protein is Probable septum site-determining protein MinC.